Consider the following 94-residue polypeptide: Large ribosomal subunit protein bL25 (94 aa).

The protein belongs to the bacterial ribosomal protein bL25 family. Part of the 50S ribosomal subunit; part of the 5S rRNA/L5/L18/L25 subcomplex. Contacts the 5S rRNA. Binds to the 5S rRNA independently of L5 and L18.

Its function is as follows. This is one of the proteins that binds to the 5S RNA in the ribosome where it forms part of the central protuberance. The polypeptide is Large ribosomal subunit protein bL25 (Salmonella gallinarum (strain 287/91 / NCTC 13346)).